We begin with the raw amino-acid sequence, 409 residues long: Nitrogen permease regulator 2 homolog (409 aa).

This sequence belongs to the NPR2 family.

Its subcellular location is the cytoplasm. The protein resides in the nucleus. Its function is as follows. Mediates inactivation of the TORC1 complex in response to amino acid starvation. Post-transcriptional regulator of nitrogen permeases. The sequence is that of Nitrogen permease regulator 2 homolog from Schizosaccharomyces pombe (strain 972 / ATCC 24843) (Fission yeast).